The chain runs to 589 residues: ATP-dependent lipid A-core flippase (589 aa).

Transmembrane regions (helical) follow at residues W29–L49, A68–I88, V157–L177, I254–A274, and L283–K303. In terms of domain architecture, ABC transmembrane type-1 spans V32–S314. The ABC transporter domain maps to I346–M582. G380–S387 contributes to the ATP binding site.

Belongs to the ABC transporter superfamily. Lipid exporter (TC 3.A.1.106) family. Homodimer.

Its subcellular location is the cell inner membrane. It carries out the reaction ATP + H2O + lipid A-core oligosaccharideSide 1 = ADP + phosphate + lipid A-core oligosaccharideSide 2.. In terms of biological role, involved in lipopolysaccharide (LPS) biosynthesis. Translocates lipid A-core from the inner to the outer leaflet of the inner membrane. Transmembrane domains (TMD) form a pore in the inner membrane and the ATP-binding domain (NBD) is responsible for energy generation. This is ATP-dependent lipid A-core flippase from Xylella fastidiosa (strain Temecula1 / ATCC 700964).